The following is a 389-amino-acid chain: Xylose isomerase (389 aa).

Residues histidine 54 and aspartate 57 contribute to the active site. Residues glutamate 181, glutamate 217, histidine 220, aspartate 245, aspartate 255, aspartate 257, and aspartate 287 each coordinate Mg(2+).

The protein belongs to the xylose isomerase family. In terms of assembly, homotetramer. The cofactor is Mg(2+).

The protein localises to the cytoplasm. It catalyses the reaction alpha-D-xylose = alpha-D-xylulofuranose. Functionally, involved in D-xylose catabolism. The chain is Xylose isomerase (xylA) from Streptomyces violaceusniger.